Here is a 581-residue protein sequence, read N- to C-terminus: Proline--tRNA ligase (581 aa).

Belongs to the class-II aminoacyl-tRNA synthetase family. ProS type 1 subfamily. Homodimer.

It is found in the cytoplasm. The enzyme catalyses tRNA(Pro) + L-proline + ATP = L-prolyl-tRNA(Pro) + AMP + diphosphate. Functionally, catalyzes the attachment of proline to tRNA(Pro) in a two-step reaction: proline is first activated by ATP to form Pro-AMP and then transferred to the acceptor end of tRNA(Pro). As ProRS can inadvertently accommodate and process non-cognate amino acids such as alanine and cysteine, to avoid such errors it has two additional distinct editing activities against alanine. One activity is designated as 'pretransfer' editing and involves the tRNA(Pro)-independent hydrolysis of activated Ala-AMP. The other activity is designated 'posttransfer' editing and involves deacylation of mischarged Ala-tRNA(Pro). The misacylated Cys-tRNA(Pro) is not edited by ProRS. In Azoarcus sp. (strain BH72), this protein is Proline--tRNA ligase.